Here is a 288-residue protein sequence, read N- to C-terminus: Glucose uptake protein GlcU (288 aa).

The next 10 membrane-spanning stretches (helical) occupy residues 4–26 (LIALLPALFWGSVVLINVLVGGG), 33–51 (GTTFGALIIGIILLLTGNA), 56–75 (LTIIIVGLISGAFWALGQGY), 82–104 (LIGVSKTMPISTGLQLVGTTLFS), 114–136 (GVQVTLGLVAMVLLVIGIALTSI), 148–170 (NFGKAMPILLISTVGYVVYVVVA), 180–197 (ALFFQSIGMAIGGLILSA), 206–225 (TLWNLIPGIVWGIGNLFMFY), 230–252 (VGVATSFSFSQLLVIVSTLGGIF), and 264–283 (IGIWAGIVLIVIAPLYSEIL).

It belongs to the GRP transporter (TC 2.A.7.5) family.

It is found in the cell membrane. Functionally, involved in the uptake of glucose. This Staphylococcus xylosus protein is Glucose uptake protein GlcU (glcU).